Consider the following 81-residue polypeptide: RNA-binding protein Hfq (81 aa).

One can recognise a Sm domain in the interval 9–68 (DPYLNILRKERVPVSIFLVNGIKLQGQIESFDQFVILLKNTVSQMVYKHAISTVVPSRTI).

The protein belongs to the Hfq family. As to quaternary structure, homohexamer.

Functionally, RNA chaperone that binds small regulatory RNA (sRNAs) and mRNAs to facilitate mRNA translational regulation in response to envelope stress, environmental stress and changes in metabolite concentrations. Also binds with high specificity to tRNAs. This Marinomonas sp. (strain MWYL1) protein is RNA-binding protein Hfq.